Consider the following 446-residue polypeptide: F-box/LRR-repeat protein At4g29420 (446 aa).

The region spanning Met1 to Tyr51 is the F-box domain. LRR repeat units lie at residues Val59 to Val84, Asp103 to Asp130, Ser135 to Asn160, Phe181 to Gly206, Cys223 to Cys248, His265 to Ser289, Gln318 to Pro343, and Asn382 to Ile407.

This is F-box/LRR-repeat protein At4g29420 from Arabidopsis thaliana (Mouse-ear cress).